The following is an 83-amino-acid chain: Large ribosomal subunit protein bL27 (83 aa).

The tract at residues 1–21 is disordered; the sequence is MAHKRSSGAGRNGRDSNPKYL.

It belongs to the bacterial ribosomal protein bL27 family.

The protein is Large ribosomal subunit protein bL27 of Kosmotoga olearia (strain ATCC BAA-1733 / DSM 21960 / TBF 19.5.1).